The following is an 88-amino-acid chain: UPF0298 protein BC_3932 (88 aa).

Belongs to the UPF0298 family.

It is found in the cytoplasm. The protein is UPF0298 protein BC_3932 of Bacillus cereus (strain ATCC 14579 / DSM 31 / CCUG 7414 / JCM 2152 / NBRC 15305 / NCIMB 9373 / NCTC 2599 / NRRL B-3711).